A 353-amino-acid polypeptide reads, in one-letter code: Guanine nucleotide-binding protein G(q) subunit alpha (353 aa).

Residues Cys3 and Cys4 are each lipidated (S-palmitoyl cysteine). Residues 32 to 353 (RELKLLLLGT…QLNLKEYNLV (322 aa)) form the G-alpha domain. The segment at 35-48 (KLLLLGTGESGKST) is G1 motif. GTP-binding positions include 40 to 47 (GTGESGKS), 174 to 180 (LRVRVPT), 199 to 203 (DVGGQ), 268 to 271 (NKKD), and Ala325. Residues Ser47 and Thr180 each coordinate Mg(2+). The G2 motif stretch occupies residues 172–180 (DILRVRVPT). The segment at 195–204 (FRMVDVGGQR) is G3 motif. Residues 264-271 (ILFLNKKD) are G4 motif. The G5 motif stretch occupies residues 323 to 328 (TCATDT).

Belongs to the G-alpha family. G(q) subfamily. In terms of assembly, g proteins are composed of 3 units; alpha, beta and gamma. The alpha chain contains the guanine nucleotide binding site.

Functionally, guanine nucleotide-binding proteins (G proteins) are involved as modulators or transducers in various transmembrane signaling systems. This is Guanine nucleotide-binding protein G(q) subunit alpha from Lymnaea stagnalis (Great pond snail).